Here is a 115-residue protein sequence, read N- to C-terminus: V-type proton ATPase subunit G (115 aa).

It belongs to the V-ATPase G subunit family. V-ATPase is a heteromultimeric enzyme composed of a peripheral catalytic V1 complex (components A to H) attached to an integral membrane V0 proton pore complex (components: a, c, c', c'', d, e, f and VOA1).

It localises to the vacuole membrane. Subunit of the V1 complex of vacuolar(H+)-ATPase (V-ATPase), a multisubunit enzyme composed of a peripheral complex (V1) that hydrolyzes ATP and a membrane integral complex (V0) that translocates protons. V-ATPase is responsible for acidifying and maintaining the pH of intracellular compartments. In Neurospora crassa (strain ATCC 24698 / 74-OR23-1A / CBS 708.71 / DSM 1257 / FGSC 987), this protein is V-type proton ATPase subunit G (vma-10).